The following is a 249-amino-acid chain: Mannose-binding protein A (249 aa).

Residues 1-20 (MLLFSSLPVLLLCVVTASYS) form the signal peptide. Residues 41 to 102 (VTNGTPGRDG…KGDPGDTSGV (62 aa)) form a disordered region. A compositionally biased stretch (basic and acidic residues) spans 48 to 60 (RDGRDGPKGEKGE). 4-hydroxyproline is present on Pro-54. Lys-55 and Lys-58 each carry 5-hydroxylysine. O-linked (Gal...) hydroxylysine glycans are attached at residues Lys-55 and Lys-58. 4-hydroxyproline is present on residues Pro-61, Pro-72, Pro-78, and Pro-89. A Collagen-like domain is found at 64–98 (GFRGSQGPPGKMGPPGNIGETGPLGPKGQKGDPGD). 2 positions are modified to 5-hydroxylysine: Lys-90 and Lys-93. 2 O-linked (Gal...) hydroxylysine glycosylation sites follow: Lys-90 and Lys-93. Positions 135–246 (SRKKLYVTNG…CSSSFLAVCE (112 aa)) constitute a C-type lectin domain. Disulfide bonds link Cys-156-Cys-245 and Cys-223-Cys-237. 9 residues coordinate Ca(2+): Asp-189, Glu-193, Glu-213, Asn-215, Asp-216, Glu-221, Asp-222, Asn-233, and Asp-234. Residues 213–221 (EPNDHGSGE) form a calcium-dependent carbohydrate binding region.

In terms of assembly, interacts with MASP1 and MASP2. Forms oligomeric complexes of 3, 4, 5 or, predominantly, 6 homotrimers. The homotrimers appear as globular heads that are connected to a central hub by thin stalks. In terms of processing, hydroxylated on lysine and proline residues within the collagen-like domain. O-glycosylated. O-linked glycans on hydroxylysine residues consist of Glc-Gal disaccharides bound to the oxygen atom of post-translationally added hydroxyl groups. Detected in blood serum (at protein level). Expressed in liver. Weakly expressed in lung, testis and brain. Not detected in bone marrow and heart.

The protein localises to the secreted. Functionally, calcium-dependent lectin. Plays a role in the innate immune response by binding mannose, fucose and N-acetylglucosamine on bacteria, including strains of A.suis, H.parasuis and A.pleuropneumoniae, and activates the lectin complement pathway. According to some authors, it only binds mannose. The sequence is that of Mannose-binding protein A from Sus scrofa (Pig).